A 232-amino-acid chain; its full sequence is dTTP/UTP pyrophosphatase (232 aa).

Asp-103 functions as the Proton acceptor in the catalytic mechanism.

It belongs to the Maf family. YhdE subfamily. A divalent metal cation is required as a cofactor.

Its subcellular location is the cytoplasm. It carries out the reaction dTTP + H2O = dTMP + diphosphate + H(+). It catalyses the reaction UTP + H2O = UMP + diphosphate + H(+). The catalysed reaction is 5-methyl-UTP + H2O = 5-methyl-UMP + diphosphate + H(+). The enzyme catalyses psi-UTP + H2O = psi-UMP + diphosphate + H(+). In terms of biological role, nucleoside triphosphate pyrophosphatase that hydrolyzes dTTP and UTP. Can also hydrolyze the modified nucleotides 5-methyl-UTP (m(5)UTP) and pseudo-UTP. Has weak activity with CTP. May have a dual role in cell division arrest and in preventing the incorporation of modified nucleotides into cellular nucleic acids. This chain is dTTP/UTP pyrophosphatase, found in Saccharomyces cerevisiae (strain ATCC 204508 / S288c) (Baker's yeast).